Here is a 444-residue protein sequence, read N- to C-terminus: Glucarate dehydratase (444 aa).

Substrate is bound by residues His30, Thr101, Tyr148, and Lys203. The Proton acceptor role is filled by Lys205. Mg(2+) is bound by residues Asp233, Glu264, and Asn287. 233–235 (DPN) contributes to the substrate binding site. Substrate is bound by residues Asn287, 337–339 (HSN), His366, and Arg420. The Proton acceptor role is filled by His337.

This sequence belongs to the mandelate racemase/muconate lactonizing enzyme family. GlucD subfamily. Mg(2+) is required as a cofactor.

It carries out the reaction D-glucarate = 5-dehydro-4-deoxy-D-glucarate + H2O. The protein operates within carbohydrate acid metabolism; D-glucarate degradation; 2,5-dioxopentanoate from D-glucarate: step 1/2. Catalyzes the dehydration of glucarate to 5-keto-4-deoxy-D-glucarate (5-kdGluc). This is Glucarate dehydratase (gudD) from Acinetobacter baylyi (strain ATCC 33305 / BD413 / ADP1).